We begin with the raw amino-acid sequence, 573 residues long: F-box/WD repeat-containing protein 5 (573 aa).

One can recognise an F-box domain in the interval 3-49 (EGGLPLLPDSLVYQIFLSLGPADVLAAGLVCRQWQAVSRDEFLWKEQ). A WD 1 repeat occupies 90-129 (EHTDQVLHLSFSHSGYQFASCSKDCTVKIWNNDLTISLLH). A Phosphoserine; by PLK4 modification is found at Ser-151. A D-box motif is present at residues 308–316 (RRVFDSVLD). 2 WD repeats span residues 470–509 (TPND…CLAK) and 511–551 (RHED…RVLQ).

It belongs to the FBXW5 family. Part of the SCF (SKP1-CUL1-F-box) E3 ubiquitin-protein ligase complex SCF(FBXW5) composed of CUL1, SKP1, RBX1 and FBXW5. Component of the DCX(FBXW5) E3 ubiquitin ligase complex, at least composed of (CUL4A or CUL4B), DDB1, FBXW5 and RBX1. Interacts with CDC20, TSC1, TSC2 and SASS6. Interacts with EPS8. Interacts with TNFAIP8L1; TNFAIP8L1 competes with TSC2 to bind FBXW5 increasing TSC2 stability by preventing its ubiquitination. Post-translationally, phosphorylated at Ser-151 by PLK4 during the G1/S transition, leading to inhibit its ability to ubiquitinate SASS6. In terms of processing, ubiquitinated and degraded by the APC/C complex during mitosis and G1 phase. In terms of tissue distribution, widely expressed in adult and embryonal tissues.

It is found in the cytoplasm. It functions in the pathway protein modification; protein ubiquitination. Substrate recognition component of both SCF (SKP1-CUL1-F-box protein) and DCX (DDB1-CUL4-X-box) E3 ubiquitin-protein ligase complexes. Substrate-specific adapter of the DCX(FBXW5) E3 ubiquitin-protein ligase complex which mediates the polyubiquitination and subsequent degradation of TSC2. May also act as a negative regulator of MAP3K7/TAK1 signaling in the interleukin-1B (IL1B) signaling pathway. Substrate recognition component of the SCF(FBXW5) E3 ubiquitin-protein ligase complex which mediates the ubiquitination and subsequent proteasomal degradation of SASS6 during S phase, leading to prevent centriole reduplication. The SCF(FBXW5) complex also mediates ubiquitination and degradation of actin-regulator EPS8 during G2 phase, leading to the transient degradation of EPS8 and subsequent cell shape changes required to allow mitotic progression. In Mus musculus (Mouse), this protein is F-box/WD repeat-containing protein 5 (Fbxw5).